A 975-amino-acid chain; its full sequence is Protein HIRA (975 aa).

WD repeat units follow at residues Arg-10–Asp-50, Asp-64–Glu-103, Gly-123–Val-162, Gly-165–Arg-204, Gly-214–Asp-256, Gly-259–Val-331, and Phe-335–Arg-374. Low complexity predominate over residues Lys-418–Ser-433. Disordered regions lie at residues Lys-418 to Asn-510 and Asn-948 to Ser-975. Positions Asp-435 to Asn-445 are enriched in polar residues. Residues Lys-478–Ile-492 show a composition bias toward basic and acidic residues. A compositionally biased stretch (polar residues) spans Pro-499–Asn-510. A coiled-coil region spans residues Ala-923–Val-954.

The protein belongs to the WD repeat HIR1 family.

Its subcellular location is the nucleus. Functionally, histone chaperone involved in maintining knox genes silencing throughout leaf development. The protein is Protein HIRA of Oryza sativa subsp. japonica (Rice).